Here is a 305-residue protein sequence, read N- to C-terminus: Protoheme IX farnesyltransferase (305 aa).

9 consecutive transmembrane segments (helical) span residues 31 to 51 (VMSL…YSVH), 52 to 72 (PFIA…AGAI), 102 to 119 (ALSF…FMAL), 123 to 145 (LLAS…IWLK), 151 to 171 (NIVI…AAVS), 179 to 199 (IILF…LALF), 225 to 245 (ILIY…IGMN), 247 to 267 (FIYL…SGSL), and 284 to 304 (SIFY…ISLI).

It belongs to the UbiA prenyltransferase family. Protoheme IX farnesyltransferase subfamily.

The protein localises to the cell inner membrane. The enzyme catalyses heme b + (2E,6E)-farnesyl diphosphate + H2O = Fe(II)-heme o + diphosphate. It functions in the pathway porphyrin-containing compound metabolism; heme O biosynthesis; heme O from protoheme: step 1/1. In terms of biological role, converts heme B (protoheme IX) to heme O by substitution of the vinyl group on carbon 2 of heme B porphyrin ring with a hydroxyethyl farnesyl side group. This chain is Protoheme IX farnesyltransferase, found in Rickettsia felis (strain ATCC VR-1525 / URRWXCal2) (Rickettsia azadi).